We begin with the raw amino-acid sequence, 409 residues long: Mitochondrial inner membrane protein oxa1-2 (409 aa).

A helical transmembrane segment spans residues 76–96; sequence VVYTPSLPLSSSVLASFSFLP. Over 97–114 the chain is Mitochondrial intermembrane; sequence HNILQNGLNTLHIWSGLP. Residues 115-135 traverse the membrane as a helical segment; the sequence is WWASIAACAVAMRIAVFPIML. Over 136–188 the chain is Mitochondrial matrix; that stretch reads KMMKTSAKLAIINPKVAEHMSVLSKAKAEGNSELMMQATTQIQNLYKVNNVNP. The chain crosses the membrane as a helical span at residues 189 to 209; the sequence is LNLLSAPVFQGILFISFFYAL. At 210 to 235 the chain is on the mitochondrial intermembrane side; the sequence is KTMAGVPVEGFTDGGFWWVNDLSQPD. A helical transmembrane segment spans residues 236-256; sequence PLHIFPVANGLLMLLNIELGS. Residues 257–275 lie on the Mitochondrial matrix side of the membrane; sequence ETGSNKVAMSPSMKKFFRF. The helical transmembrane segment at 276–296 threads the bilayer; it reads LCLASPLFTMNFPMAIFMYWF. Topologically, residues 297 to 409 are mitochondrial intermembrane; sequence PSNVFSVFQG…SVTKPTEKKD (113 aa). The disordered stretch occupies residues 369 to 409; that stretch reads TDTNNEQKPTNNSTITKATTLSDNSQNDKSSSVTKPTEKKD. Over residues 374 to 403 the composition is skewed to polar residues; sequence EQKPTNNSTITKATTLSDNSQNDKSSSVTK.

It belongs to the OXA1/ALB3/YidC family.

The protein localises to the mitochondrion inner membrane. In terms of biological role, required for the insertion of integral membrane proteins into the mitochondrial inner membrane. Essential for the activity and assembly of cytochrome c oxidase. It is essential for viability while oxa101 is not. When both are deleted the cell is non-viable, suggesting that oxa101 act as a back-up for oxa102. The polypeptide is Mitochondrial inner membrane protein oxa1-2 (oxa102) (Schizosaccharomyces pombe (strain 972 / ATCC 24843) (Fission yeast)).